Here is a 664-residue protein sequence, read N- to C-terminus: DNA ligase (664 aa).

NAD(+)-binding positions include 32–36 and 80–81; these read DKEYD and SL. The active-site N6-AMP-lysine intermediate is the Lys-122. NAD(+) is bound by residues Arg-144, Glu-178, and Lys-314. 4 residues coordinate Zn(2+): Cys-407, Cys-410, Cys-423, and Cys-429. Residues 587-664 enclose the BRCT domain; the sequence is IDENPFMGKT…NEEEFSNKIK (78 aa).

Belongs to the NAD-dependent DNA ligase family. LigA subfamily. It depends on Mg(2+) as a cofactor. Mn(2+) is required as a cofactor.

The enzyme catalyses NAD(+) + (deoxyribonucleotide)n-3'-hydroxyl + 5'-phospho-(deoxyribonucleotide)m = (deoxyribonucleotide)n+m + AMP + beta-nicotinamide D-nucleotide.. DNA ligase that catalyzes the formation of phosphodiester linkages between 5'-phosphoryl and 3'-hydroxyl groups in double-stranded DNA using NAD as a coenzyme and as the energy source for the reaction. It is essential for DNA replication and repair of damaged DNA. This is DNA ligase from Clostridium botulinum (strain 657 / Type Ba4).